A 476-amino-acid polypeptide reads, in one-letter code: MGIKIYNTLTRQKEEFKPLREGEVRMYVCGPTVYDYTHIGHARTYIAFDVIRRYLEHKGYTVLMVMNFTDIDDKIIKRANETGEDPKELAEKFLKYFLEDMKALKVKPADIYPRVTEHIQDIIDFIRKLQEKGYAYEGSDGVYFEVRKFKDYGKLSKVKLEDLVKGARVEPGEGKKNPEDFALWKKAKPGEPKWESPWGEGRPGWHIECSTMSTKYLGESFDIHGGGSDLIFPHHENEIAQTEACTGHEWVRYWMHTGFLMVNGEKMSKSLGNFVTIREALERYDPEVIRLFVLQRHYRSPLDYTEEGLEHAKNNLERLYNTLENIRVAMERAEISFKWGEEEFEAYEAIRDGRKKFYDAMDDDFNTAEALKAVFEVSNAINRYLTQVEKPKESILRKAWEFFKMVSEVFGIFEDYFREQKAGEEEALIKLLIDVRAQLRKERKFDLADKIRDELRNLGIQLEDTPQGTVWKRIKV.

Cys-29 serves as a coordination point for Zn(2+). A 'HIGH' region motif is present at residues 31-41; sequence PTVYDYTHIGH. Residues Cys-209, His-234, and Glu-238 each contribute to the Zn(2+) site. Positions 266 to 270 match the 'KMSKS' region motif; that stretch reads KMSKS. Lys-269 contacts ATP.

Belongs to the class-I aminoacyl-tRNA synthetase family. Requires Zn(2+) as cofactor.

The protein localises to the cytoplasm. It carries out the reaction tRNA(Cys) + L-cysteine + ATP = L-cysteinyl-tRNA(Cys) + AMP + diphosphate. The sequence is that of Cysteine--tRNA ligase from Thermococcus kodakarensis (strain ATCC BAA-918 / JCM 12380 / KOD1) (Pyrococcus kodakaraensis (strain KOD1)).